The primary structure comprises 487 residues: Probable glycine dehydrogenase (decarboxylating) subunit 2 (487 aa).

N6-(pyridoxal phosphate)lysine is present on Lys-269.

This sequence belongs to the GcvP family. C-terminal subunit subfamily. The glycine cleavage system is composed of four proteins: P, T, L and H. In this organism, the P 'protein' is a heterodimer of two subunits. Pyridoxal 5'-phosphate serves as cofactor.

It carries out the reaction N(6)-[(R)-lipoyl]-L-lysyl-[glycine-cleavage complex H protein] + glycine + H(+) = N(6)-[(R)-S(8)-aminomethyldihydrolipoyl]-L-lysyl-[glycine-cleavage complex H protein] + CO2. The glycine cleavage system catalyzes the degradation of glycine. The P protein binds the alpha-amino group of glycine through its pyridoxal phosphate cofactor; CO(2) is released and the remaining methylamine moiety is then transferred to the lipoamide cofactor of the H protein. The chain is Probable glycine dehydrogenase (decarboxylating) subunit 2 from Prosthecochloris aestuarii (strain DSM 271 / SK 413).